The sequence spans 529 residues: Peptide chain release factor 3 (529 aa).

The region spanning 11 to 280 (AKRRTFAIIS…GLVEWAPAPM (270 aa)) is the tr-type G domain. Residues 20-27 (SHPDAGKT), 88-92 (DTPGH), and 142-145 (NKLD) contribute to the GTP site.

This sequence belongs to the TRAFAC class translation factor GTPase superfamily. Classic translation factor GTPase family. PrfC subfamily.

The protein localises to the cytoplasm. Its function is as follows. Increases the formation of ribosomal termination complexes and stimulates activities of RF-1 and RF-2. It binds guanine nucleotides and has strong preference for UGA stop codons. It may interact directly with the ribosome. The stimulation of RF-1 and RF-2 is significantly reduced by GTP and GDP, but not by GMP. This is Peptide chain release factor 3 from Shigella flexneri.